Reading from the N-terminus, the 159-residue chain is 6,7-dimethyl-8-ribityllumazine synthase (159 aa).

Residues Phe23, 58 to 60 (AYE), and 82 to 84 (TII) each bind 5-amino-6-(D-ribitylamino)uracil. The Proton donor role is filled by His90. Leu115 lines the 5-amino-6-(D-ribitylamino)uracil pocket. Arg129 lines the (2S)-2-hydroxy-3-oxobutyl phosphate pocket.

Belongs to the DMRL synthase family. As to quaternary structure, forms an icosahedral capsid composed of 60 subunits, arranged as a dodecamer of pentamers.

The enzyme catalyses (2S)-2-hydroxy-3-oxobutyl phosphate + 5-amino-6-(D-ribitylamino)uracil = 6,7-dimethyl-8-(1-D-ribityl)lumazine + phosphate + 2 H2O + H(+). The protein operates within cofactor biosynthesis; riboflavin biosynthesis; riboflavin from 2-hydroxy-3-oxobutyl phosphate and 5-amino-6-(D-ribitylamino)uracil: step 1/2. In terms of biological role, catalyzes the formation of 6,7-dimethyl-8-ribityllumazine by condensation of 5-amino-6-(D-ribitylamino)uracil with 3,4-dihydroxy-2-butanone 4-phosphate. This is the penultimate step in the biosynthesis of riboflavin. The chain is 6,7-dimethyl-8-ribityllumazine synthase from Blochmanniella floridana.